Reading from the N-terminus, the 190-residue chain is Frataxin homolog, mitochondrial (190 aa).

Belongs to the frataxin family. As to quaternary structure, monomer (probable predominant form). Oligomer. Interacts with IscU. Component of the mitochondrial core iron-sulfur cluster (ISC) assembly complex at least composed of the cysteine desulfurase Nfs1, the scaffold protein IscU, the accessory protein bcn92/Isd11/Lyrm4, and probably fh/frataxin.

The protein localises to the mitochondrion. It carries out the reaction 4 Fe(2+) + O2 + 4 H(+) = 4 Fe(3+) + 2 H2O. Its function is as follows. Promotes the biosynthesis of heme as well as the assembly and repair of iron-sulfur clusters by delivering Fe(2+) to proteins involved in these pathways. May play a role in the protection against iron-catalyzed oxidative stress through its ability to catalyze the oxidation of Fe(2+) to Fe(3+). May be able to store large amounts of the metal in the form of a ferrihydrite mineral by oligomerization. Required for ecdysteroidogenesis in the prothoracic gland which is necessary for larval to pupal transition. The polypeptide is Frataxin homolog, mitochondrial (Drosophila melanogaster (Fruit fly)).